The chain runs to 366 residues: Anhydro-N-acetylmuramic acid kinase (366 aa).

15–22 (GTSLDGVD) contributes to the ATP binding site.

This sequence belongs to the anhydro-N-acetylmuramic acid kinase family.

The enzyme catalyses 1,6-anhydro-N-acetyl-beta-muramate + ATP + H2O = N-acetyl-D-muramate 6-phosphate + ADP + H(+). Its pathway is amino-sugar metabolism; 1,6-anhydro-N-acetylmuramate degradation. It participates in cell wall biogenesis; peptidoglycan recycling. Its function is as follows. Catalyzes the specific phosphorylation of 1,6-anhydro-N-acetylmuramic acid (anhMurNAc) with the simultaneous cleavage of the 1,6-anhydro ring, generating MurNAc-6-P. Is required for the utilization of anhMurNAc either imported from the medium or derived from its own cell wall murein, and thus plays a role in cell wall recycling. The polypeptide is Anhydro-N-acetylmuramic acid kinase (Hydrogenovibrio crunogenus (strain DSM 25203 / XCL-2) (Thiomicrospira crunogena)).